Here is a 283-residue protein sequence, read N- to C-terminus: MITGKARVAGVIGWPVGHSRSPRLHGFWLARHGIDGAYVPLAVAPEALERALAALPALGLAGVNVTVPHKEHALARMDALTERARRIGAVNTIVCQSDGRLLGDNTDGFGFLENLRQRRPDWRAGHGPAVVLGAGGAARAVCASLLEAGCPALTLVNRDQGRARALAEALAAWSPVPITLATWDEAPRTLGGAALLVNTTSLGMVGQPPLDLDLRGLAPSALVTDIVYAPLETPLLARARALGLATVDGLGMLLHQGRPGFEAWFGVAPEVDDALRAAVLGKP.

Shikimate-binding positions include 19 to 21 and Thr66; that span reads SRS. Catalysis depends on Lys70, which acts as the Proton acceptor. Glu82 serves as a coordination point for NADP(+). Asn91 and Asp107 together coordinate shikimate. NADP(+) contacts are provided by residues 133 to 137 and Ile226; that span reads GAGGA. Tyr228 is a binding site for shikimate. NADP(+) is bound at residue Gly249.

It belongs to the shikimate dehydrogenase family. As to quaternary structure, homodimer.

The enzyme catalyses shikimate + NADP(+) = 3-dehydroshikimate + NADPH + H(+). It participates in metabolic intermediate biosynthesis; chorismate biosynthesis; chorismate from D-erythrose 4-phosphate and phosphoenolpyruvate: step 4/7. Its function is as follows. Involved in the biosynthesis of the chorismate, which leads to the biosynthesis of aromatic amino acids. Catalyzes the reversible NADPH linked reduction of 3-dehydroshikimate (DHSA) to yield shikimate (SA). The sequence is that of Shikimate dehydrogenase (NADP(+)) from Rhodospirillum rubrum (strain ATCC 11170 / ATH 1.1.1 / DSM 467 / LMG 4362 / NCIMB 8255 / S1).